The sequence spans 192 residues: RNA-free ribonuclease P (192 aa).

It belongs to the HARP family.

The catalysed reaction is Endonucleolytic cleavage of RNA, removing 5'-extranucleotides from tRNA precursor.. RNA-free RNase P that catalyzes the removal of the 5'-leader sequence from pre-tRNA to produce the mature 5'-terminus. In Alkalilimnicola ehrlichii (strain ATCC BAA-1101 / DSM 17681 / MLHE-1), this protein is RNA-free ribonuclease P.